We begin with the raw amino-acid sequence, 142 residues long: Large ribosomal subunit protein uL11 (142 aa).

The protein belongs to the universal ribosomal protein uL11 family. In terms of assembly, part of the ribosomal stalk of the 50S ribosomal subunit. Interacts with L10 and the large rRNA to form the base of the stalk. L10 forms an elongated spine to which L12 dimers bind in a sequential fashion forming a multimeric L10(L12)X complex. Post-translationally, one or more lysine residues are methylated.

Forms part of the ribosomal stalk which helps the ribosome interact with GTP-bound translation factors. The polypeptide is Large ribosomal subunit protein uL11 (Mycobacterium leprae (strain Br4923)).